Here is a 65-residue protein sequence, read N- to C-terminus: Small ribosomal subunit protein bS21 (65 aa).

The protein belongs to the bacterial ribosomal protein bS21 family.

In Flavobacterium psychrophilum (strain ATCC 49511 / DSM 21280 / CIP 103535 / JIP02/86), this protein is Small ribosomal subunit protein bS21.